The sequence spans 485 residues: Glutamate--tRNA ligase (485 aa).

Positions 11 to 21 (PSPTGHLHIGN) match the 'HIGH' region motif. Residues 252 to 256 (KLSKR) carry the 'KMSKS' region motif. ATP is bound at residue lysine 255.

The protein belongs to the class-I aminoacyl-tRNA synthetase family. Glutamate--tRNA ligase type 1 subfamily. As to quaternary structure, monomer.

The protein localises to the cytoplasm. The enzyme catalyses tRNA(Glu) + L-glutamate + ATP = L-glutamyl-tRNA(Glu) + AMP + diphosphate. Functionally, catalyzes the attachment of glutamate to tRNA(Glu) in a two-step reaction: glutamate is first activated by ATP to form Glu-AMP and then transferred to the acceptor end of tRNA(Glu). The protein is Glutamate--tRNA ligase of Bacillus cereus (strain ATCC 10987 / NRS 248).